Consider the following 410-residue polypeptide: MKQELIERFTRYVKIDTQSNEESHTVPTTPGQIEFGKLLVEELKEIGLTEVTMDDNGYVMATLPANTDKDVPVIGFLAHLDTATDFTGKNVKPQIHENFDGNAITLNEELNVVLTPEQFPELPSYKGHTIITTDGTTLLGADDKAGLTEIMVAMNHLIHNPQIKHGKIRVAFTPDEEIGRGPAHFDVEAFGASFAYTMDGGPLGGLEYESFNAAGAKLTFNGTNTHPGTAKNKMRNATKLAMEFNGYLPVEEAPEYTEGYEGFYHLLSLNGDVEQSKAYYIIRDFDRENFEARKNNVKNIVKTMQEKYGEDAVVLEMNDQYYNMLEKIEPVREIVDIAYEAMKSLDIEPNIHPIRGGTDGSQLSYMGLPTPNIFTGGENYHGKFEYVSVDTMEKAVQVIVEIARRFEEQA.

H79 lines the Zn(2+) pocket. Residue D81 is part of the active site. Position 142 (D142) interacts with Zn(2+). E176 acts as the Proton acceptor in catalysis. 3 residues coordinate Zn(2+): E177, D199, and H381.

It belongs to the peptidase M20B family. The cofactor is Zn(2+).

It is found in the cytoplasm. It carries out the reaction Release of the N-terminal residue from a tripeptide.. Its function is as follows. Cleaves the N-terminal amino acid of tripeptides. The sequence is that of Peptidase T from Bacillus cereus (strain B4264).